Consider the following 369-residue polypeptide: Thyroid hormone receptor beta (369 aa).

The interval Met1–Leu14 is modulating. Residues Cys15, Cys18, Cys32, Cys35, Cys53, Cys59, Cys69, and Cys72 each contribute to the Zn(2+) site. NR C4-type zinc fingers lie at residues Cys15–Cys35 and Cys53–Cys77. Positions Cys15 to Asp89 form a DNA-binding region, nuclear receptor. The region spanning Glu125 to Asp369 is the NR LBD domain. 3,3',5-triiodo-L-thyronine contacts are provided by Arg190, Asn239, and His343. Positions 190, 239, and 343 each coordinate L-thyroxine.

Belongs to the nuclear hormone receptor family. NR1 subfamily.

It localises to the nucleus. Its function is as follows. Nuclear hormone receptor that can act as a repressor or activator of transcription. High affinity receptor for thyroid hormones, including triiodothyronine and thyroxine. This Cairina moschata (Muscovy duck) protein is Thyroid hormone receptor beta (THRB).